A 409-amino-acid chain; its full sequence is DNA replication and repair protein RecF (409 aa).

Position 30–37 (30–37 (GSNGHGKT)) interacts with ATP.

The protein belongs to the RecF family.

The protein localises to the cytoplasm. Its function is as follows. The RecF protein is involved in DNA metabolism; it is required for DNA replication and normal SOS inducibility. RecF binds preferentially to single-stranded, linear DNA. It also seems to bind ATP. This Rhodococcus erythropolis (strain PR4 / NBRC 100887) protein is DNA replication and repair protein RecF.